The sequence spans 259 residues: Large ribosomal subunit protein uL4 (259 aa).

Positions tryptophan 47–glycine 67 are disordered.

Belongs to the universal ribosomal protein uL4 family. As to quaternary structure, part of the 50S ribosomal subunit.

Functionally, one of the primary rRNA binding proteins, this protein initially binds near the 5'-end of the 23S rRNA. It is important during the early stages of 50S assembly. It makes multiple contacts with different domains of the 23S rRNA in the assembled 50S subunit and ribosome. Its function is as follows. Forms part of the polypeptide exit tunnel. The chain is Large ribosomal subunit protein uL4 from Methanosphaera stadtmanae (strain ATCC 43021 / DSM 3091 / JCM 11832 / MCB-3).